Consider the following 143-residue polypeptide: 6,7-dimethyl-8-ribityllumazine synthase (143 aa).

Residues Trp-10, 44 to 46 (SFE), and 68 to 70 (CVI) contribute to the 5-amino-6-(D-ribitylamino)uracil site. 73–74 (DT) contributes to the (2S)-2-hydroxy-3-oxobutyl phosphate binding site. The active-site Proton donor is the His-76. Tyr-101 contacts 5-amino-6-(D-ribitylamino)uracil. Arg-115 provides a ligand contact to (2S)-2-hydroxy-3-oxobutyl phosphate.

It belongs to the DMRL synthase family.

It carries out the reaction (2S)-2-hydroxy-3-oxobutyl phosphate + 5-amino-6-(D-ribitylamino)uracil = 6,7-dimethyl-8-(1-D-ribityl)lumazine + phosphate + 2 H2O + H(+). Its pathway is cofactor biosynthesis; riboflavin biosynthesis; riboflavin from 2-hydroxy-3-oxobutyl phosphate and 5-amino-6-(D-ribitylamino)uracil: step 1/2. Catalyzes the formation of 6,7-dimethyl-8-ribityllumazine by condensation of 5-amino-6-(D-ribitylamino)uracil with 3,4-dihydroxy-2-butanone 4-phosphate. This is the penultimate step in the biosynthesis of riboflavin. The protein is 6,7-dimethyl-8-ribityllumazine synthase of Bacteroides fragilis (strain YCH46).